We begin with the raw amino-acid sequence, 117 residues long: UPF0342 protein lwe2240 (117 aa).

This sequence belongs to the UPF0342 family.

In Listeria welshimeri serovar 6b (strain ATCC 35897 / DSM 20650 / CCUG 15529 / CIP 8149 / NCTC 11857 / SLCC 5334 / V8), this protein is UPF0342 protein lwe2240.